Consider the following 224-residue polypeptide: Cytidylate kinase (224 aa).

9–17 (GPSGVGKGT) provides a ligand contact to ATP.

Belongs to the cytidylate kinase family. Type 1 subfamily.

It is found in the cytoplasm. It carries out the reaction CMP + ATP = CDP + ADP. The enzyme catalyses dCMP + ATP = dCDP + ADP. The sequence is that of Cytidylate kinase from Dichelobacter nodosus (strain VCS1703A).